Here is a 392-residue protein sequence, read N- to C-terminus: Homoserine O-acetyltransferase (392 aa).

In terms of domain architecture, AB hydrolase-1 spans 52-356 (NVVVVLHALT…ICGHDGFLVE (305 aa)). Residue S157 is the Nucleophile of the active site. Position 227 (R227) interacts with substrate. Residues D320 and H350 contribute to the active site. A substrate-binding site is contributed by D351. Residues 373-392 (SQSAGPGGAGPGSRKGTTRR) form a disordered region.

It belongs to the AB hydrolase superfamily. MetX family. Homodimer.

Its subcellular location is the cytoplasm. The enzyme catalyses L-homoserine + acetyl-CoA = O-acetyl-L-homoserine + CoA. It functions in the pathway amino-acid biosynthesis; L-methionine biosynthesis via de novo pathway; O-acetyl-L-homoserine from L-homoserine: step 1/1. Functionally, transfers an acetyl group from acetyl-CoA to L-homoserine, forming acetyl-L-homoserine. This Mycobacterium avium (strain 104) protein is Homoserine O-acetyltransferase.